Consider the following 108-residue polypeptide: Ig kappa chain V region K-25 (108 aa).

The tract at residues 1 to 23 (AVELTQTPASVEAAVGGTVTIKC) is framework-1. The segment at 24 to 34 (QASQBIYSYLS) is complementarity-determining-1. The interval 35–49 (WYQQKPGQPPKLLIY) is framework-2. The tract at residues 50–56 (KASTLAS) is complementarity-determining-2. A framework-3 region spans residues 57–88 (GVSSRFKGSGSGTEFTLTISDLZCADAATYYC). Positions 89–97 (QTYSYSSTY) are complementarity-determining-3. A framework-4 region spans residues 98–107 (FGGGTEVVVK).

The sequence is that of Ig kappa chain V region K-25 from Oryctolagus cuniculus (Rabbit).